The sequence spans 104 residues: Large ribosomal subunit protein bL21 (104 aa).

It belongs to the bacterial ribosomal protein bL21 family. In terms of assembly, part of the 50S ribosomal subunit. Contacts protein L20.

Its function is as follows. This protein binds to 23S rRNA in the presence of protein L20. This Streptococcus equi subsp. equi (strain 4047) protein is Large ribosomal subunit protein bL21.